A 110-amino-acid chain; its full sequence is Chorion class B protein M2410 (110 aa).

4 consecutive repeat copies span residues 1-4 (YGGL), 5-9 (GYGGL), 10-14 (GYGGL), and 15-19 (GYGGL). The segment at 1-19 (YGGLGYGGLGYGGLGYGGL) is 4 X 5 AA tandem repeats of G-Y-G-G-L. Residues 1–27 (YGGLGYGGLGYGGLGYGGLGGGCGRGF) are left arm. The central domain stretch occupies residues 28-96 (SGGGLPVATA…GNGDVGITRE (69 aa)). The segment at 97-110 (GGLGYGAGYGGGYG) is right arm (Gly-rich tandem repeats).

It belongs to the chorion protein family.

Its function is as follows. This protein is one of many from the eggshell of the silk moth. This chain is Chorion class B protein M2410, found in Bombyx mori (Silk moth).